Reading from the N-terminus, the 521-residue chain is Probable glycine dehydrogenase (decarboxylating) subunit 2 (521 aa).

The residue at position 279 (Lys279) is an N6-(pyridoxal phosphate)lysine.

Belongs to the GcvP family. C-terminal subunit subfamily. The glycine cleavage system is composed of four proteins: P, T, L and H. In this organism, the P 'protein' is a heterodimer of two subunits. Pyridoxal 5'-phosphate serves as cofactor.

It catalyses the reaction N(6)-[(R)-lipoyl]-L-lysyl-[glycine-cleavage complex H protein] + glycine + H(+) = N(6)-[(R)-S(8)-aminomethyldihydrolipoyl]-L-lysyl-[glycine-cleavage complex H protein] + CO2. Its function is as follows. The glycine cleavage system catalyzes the degradation of glycine. The P protein binds the alpha-amino group of glycine through its pyridoxal phosphate cofactor; CO(2) is released and the remaining methylamine moiety is then transferred to the lipoamide cofactor of the H protein. The sequence is that of Probable glycine dehydrogenase (decarboxylating) subunit 2 from Staphylothermus marinus (strain ATCC 43588 / DSM 3639 / JCM 9404 / F1).